Here is a 293-residue protein sequence, read N- to C-terminus: Glycine N-methyltransferase (293 aa).

Residue V2 is modified to N-acetylvaline. (6S)-5-methyl-5,6,7,8-tetrahydrofolate contacts are provided by S4 and Y6. S10 carries the post-translational modification Phosphoserine. Y22, W31, Y34, and R41 together coordinate S-adenosyl-L-methionine. Y34 bears the Phosphotyrosine mark. Residue K46 is modified to N6-succinyllysine. Residues A65, 86–88 (DAS), 117–118 (NW), 137–140 (LGNS), and R176 each bind S-adenosyl-L-methionine. An N6-succinyllysine mark is found at K191, K196, and K201. A (6S)-5-methyl-5,6,7,8-tetrahydrofolate-binding site is contributed by H215. Y221 contributes to the S-adenosyl-L-methionine binding site. (6S)-5-methyl-5,6,7,8-tetrahydrofolate is bound at residue R240.

It belongs to the class I-like SAM-binding methyltransferase superfamily. Glycine N-methyltransferase family. As to quaternary structure, homotetramer. Abundant in liver.

The protein resides in the cytoplasm. The enzyme catalyses glycine + S-adenosyl-L-methionine = sarcosine + S-adenosyl-L-homocysteine + H(+). Inhibited by 5-methyltetrahydrofolate monoglutamate and by 5-methyltetrahydrofolate pentaglutamate, inhibition is much more effective by the pentaglutamate form than by the monoglutamate form. Two molecules of 5-methyltetrahydrofolate are bound per tetramer. The binding sites are localized between subunits. Inhibitor binding may preclude movements of the polypeptide chain that are necessary for enzyme activity. Catalyzes the methylation of glycine by using S-adenosylmethionine (AdoMet) to form N-methylglycine (sarcosine) with the concomitant production of S-adenosylhomocysteine (AdoHcy), a reaction regulated by the binding of 5-methyltetrahydrofolate. Possible crucial role in the regulation of tissue concentration of AdoMet and of metabolism of methionine. The chain is Glycine N-methyltransferase (Gnmt) from Rattus norvegicus (Rat).